Reading from the N-terminus, the 53-residue chain is Lantibiotic mutacin-2 (53 aa).

Positions 1 to 26 (MNKLNSNAVVSLNEVSDSELDTILGG) are excised as a propeptide. A cross-link (beta-methyllanthionine (Thr-Cys)) is located at residues 36-41 (TVSYEC). 2 consecutive cross-links (lanthionine (Ser-Cys)) follow at residues 38–52 (SYECRMNSWQHVFTC) and 45–53 (SWQHVFTCC). At T51 the chain carries 2,3-didehydrobutyrine.

In terms of processing, maturation of lantibiotics involves the enzymatic conversion of Thr, and Ser into dehydrated AA and the formation of thioether bonds with cysteine. This is followed by membrane translocation and cleavage of the modified precursor. Post-translationally, it is not established whether the 2,3-didehydrobutyrine is the E- or Z-isomer.

Its function is as follows. Lanthionine-containing peptide antibiotic (lantibiotic) active on Gram-positive bacteria including M.luteus, S.aureus, Streptococcus, P.micros, P.acidilactici, C.sporogenes, C.diphtheriae, A.viscosus, G.vaginalis, P.acnes, L.monocytogenes and M.smegmatis, and Gram-negative bacteria including C.jejuni, H.pylori and N.gonorrhoeae. Transiently and partially depolarizes the transmembrane electrical potential and pH gradient of susceptible cells, inhibits the uptake of amino acids and depletes the intracellular ATP pool. This is Lantibiotic mutacin-2 from Streptococcus mutans.